A 318-amino-acid polypeptide reads, in one-letter code: NADH-ubiquinone oxidoreductase chain 1 (318 aa).

Helical transmembrane passes span 2-22 (FMIN…FLTL), 70-90 (MFIL…IPLP), 100-120 (LGVL…LWSG), 147-167 (AIIL…TLII), 172-192 (TWLI…TLAE), 222-242 (LFFM…AILF), 253-273 (ELYT…FLWI), and 294-314 (LPLT…TSGI).

This sequence belongs to the complex I subunit 1 family. As to quaternary structure, core subunit of respiratory chain NADH dehydrogenase (Complex I) which is composed of 45 different subunits.

It is found in the mitochondrion inner membrane. The catalysed reaction is a ubiquinone + NADH + 5 H(+)(in) = a ubiquinol + NAD(+) + 4 H(+)(out). Core subunit of the mitochondrial membrane respiratory chain NADH dehydrogenase (Complex I) which catalyzes electron transfer from NADH through the respiratory chain, using ubiquinone as an electron acceptor. Essential for the catalytic activity and assembly of complex I. The protein is NADH-ubiquinone oxidoreductase chain 1 (MT-ND1) of Bos mutus grunniens (Wild yak).